A 233-amino-acid polypeptide reads, in one-letter code: MSQSNRELVVDFLSYKLSQKGYSWSQFSDVEENRTEAPEGTESEMETPSAINGNPSWHLADSPAVNGATGHSSSLDAREVIPMAAVKQALREAGDEFELRYRRAFSDLTSQLHITPGTAYQSFEQVVNELFRDGVNWGRIVAFFSFGGALCVESVDKEMQVLVSRIAAWMATYLNDHLEPWIQENGGWDTFVELYGNNAAAESRKGQERFNRWFLTGMTVAGVVLLGSLFSRK.

The BH4 motif lies at 4–24 (SNRELVVDFLSYKLSQKGYSW). The interval 28-71 (SDVEENRTEAPEGTESEMETPSAINGNPSWHLADSPAVNGATGH) is disordered. Serine 49 is subject to Phosphoserine; by PLK3. At serine 62 the chain carries Phosphoserine; by CDK1. Residues 86-100 (VKQALREAGDEFELR) carry the BH3 motif. The BH1 signature appears at 129–148 (ELFRDGVNWGRIVAFFSFGG). Residues 180–195 (PWIQENGGWDTFVELY) carry the BH2 motif. The helical transmembrane segment at 210-226 (FNRWFLTGMTVAGVVLL) threads the bilayer.

Belongs to the Bcl-2 family. As to quaternary structure, homodimer. Interacts with BCL2L11. Interacts with BAD. Interacts with PGAM5. Interacts with HEBP2. Interacts with p53/TP53 and BBC3; interaction with BBC3 disrupts the interaction with p53/TP53. Interacts with ATP5F1A and ATP5F1B; the interactions mediate the association of isoform Bcl-X(L) with the mitochondrial membrane ATP synthase F(1)F(0) ATP synthase. Interacts with VDAC1. Interacts with BCL2L11 (via BH3). Interacts with RNF183. Interacts with GIMAP3/IAN4 and GIMAP5/IAN5. Interacts with GIMAP5 and HSPA8/HSC70; the interaction between HSPA8 and BCL2L1 is impaired in the absence of GIMAP5. Interacts with isoform 4 of CLU; this interaction releases and activates BAX and promotes cell death. In terms of assembly, forms heterodimers with BAX, BAK or BCL2; heterodimerization with BAX does not seem to be required for anti-apoptotic activity. Interacts with isoform 1 of SIVA1; the interaction inhibits the anti-apoptotic activity. Interacts with IKZF3. Interacts with RTL10/BOP. Interacts with DNM1L and CLTA; DNM1L and BCL2L1 isoform BCL-X(L) may form a complex in synaptic vesicles that also contains clathrin and MFF. Interacts (via the loop between motifs BH4 and BH3) with NLRP1 (via LRR repeats), but not with NLRP2, NLRP3, NLRP4, PYCARD, nor MEFV. Interacts with BECN1. Post-translationally, proteolytically cleaved by caspases during apoptosis. The cleaved protein, lacking the BH4 motif, has pro-apoptotic activity. In terms of processing, phosphorylated on Ser-62 by CDK1. This phosphorylation is partial in normal mitotic cells, but complete in G2-arrested cells upon DNA-damage, thus promoting subsequent apoptosis probably by triggering caspases-mediated proteolysis. Phosphorylated by PLK3, leading to regulate the G2 checkpoint and progression to cytokinesis during mitosis. Phosphorylation at Ser-49 appears during the S phase and G2, disappears rapidly in early mitosis during prometaphase, metaphase and early anaphase, and re-appears during telophase and cytokinesis. Ubiquitinated by RNF183 during prolonged ER stress, leading to degradation by the proteosome. Bcl-X(S) is expressed at high levels in cells that undergo a high rate of turnover, such as developing lymphocytes. In contrast, Bcl-X(L) is found in tissues containing long-lived postmitotic cells, such as adult brain.

It is found in the mitochondrion inner membrane. The protein resides in the mitochondrion outer membrane. It localises to the mitochondrion matrix. The protein localises to the cytoplasmic vesicle. Its subcellular location is the secretory vesicle. It is found in the synaptic vesicle membrane. The protein resides in the cytoplasm. It localises to the cytosol. The protein localises to the cytoskeleton. Its subcellular location is the microtubule organizing center. It is found in the centrosome. The protein resides in the nucleus membrane. In terms of biological role, potent inhibitor of cell death. Inhibits activation of caspases. Appears to regulate cell death by blocking the voltage-dependent anion channel (VDAC) by binding to it and preventing the release of the caspase activator, CYC1, from the mitochondrial membrane. Also acts as a regulator of G2 checkpoint and progression to cytokinesis during mitosis. Isoform Bcl-X(L) also regulates presynaptic plasticity, including neurotransmitter release and recovery, number of axonal mitochondria as well as size and number of synaptic vesicle clusters. During synaptic stimulation, increases ATP availability from mitochondria through regulation of mitochondrial membrane ATP synthase F(1)F(0) activity and regulates endocytic vesicle retrieval in hippocampal neurons through association with DMN1L and stimulation of its GTPase activity in synaptic vesicles. May attenuate inflammation impairing NLRP1-inflammasome activation, hence CASP1 activation and IL1B release. Its function is as follows. Isoform Bcl-X(S) promotes apoptosis. In Homo sapiens (Human), this protein is Bcl-2-like protein 1 (BCL2L1).